A 134-amino-acid chain; its full sequence is Cerato-platanin (134 aa).

A signal peptide spans 1–14 (MKFSILPMIASAMA). Residues 18–20 (SYD) are binding of oligomers of N-acetylglucosamine (GlcNAc). Binding of N-acetylglucosamine tetramer (GlcNAc-4) stretches follow at residues 31-43 (SVACSNGDHGLMA), 65-68 (GWDS), and 91-95 (DSGRG). 2 disulfides stabilise this stretch: Cys-34–Cys-71 and Cys-74–Cys-129. Positions 113-116 (AGRV) are binding of oligomers of N-acetylglucosamine (GlcNAc).

The protein belongs to the cerato-platanin family. Monomer.

Its subcellular location is the secreted. The protein resides in the cell wall. Its function is as follows. Phytotoxin which causes production of phytoalexin in platanus acerifolia, platanus occidentalis and platanus orientalis. Induces cell necrosis in tobacco leaves, and in callus cells and leaves of P.acerifolia. Induces reactive oxygen species (ROS) synthesis, nitric oxide (NO) production and mitogen-activated protein kinases (MAPKs) phosphorylation in the leaves of A.thaliana and P.acerifolia. Results in H(2)O(2) production on the epidermis around the stomata, rapid closure of the stomata, reduced photosynthetic and CO(2) assimilation rate, and an increase in a number of volatile organic compound (VOC) emission in A.thaliana leaves. Induces overexpression of genes related to salicylic acid- and ethylene-signaling, camalexin synthesis, ROS production and oxidative stress, and genes of various receptor kinases, and down-regulation of a number of jasmonic acid (JA)-signaling genes in A.thaliana leaves. Renders resistance against C.platani in A.thaliana and P.acerifolia. Renders localised resistance of A.thaliana against infection by virulent foliar pathogens B.cinerea and P.syringae pv. tomato. Binds cellulose analog carboxymethyl cellulose (CMC). Expansin-like protein with probable fungal and plant cell wall loosening activity based on its non-enzymatic cellulose weakening activity in vitro. Increases glucose production by cellulase after pre-incubation of cellulose with this protein. In contrast, according to PubMed:23512479, no synergistic effect with cellulases. May have a structural role in the fungal cell wall based on its ability to bind chitin, but does not bind beta-1,3-glucan. This chain is Cerato-platanin, found in Ceratocystis fimbriata f. sp. platani.